The primary structure comprises 230 residues: Large ribosomal subunit protein uL3 (230 aa).

Disordered stretches follow at residues 125–149 (QAIG…SLGD) and 210–230 (PNPK…VKNE).

This sequence belongs to the universal ribosomal protein uL3 family. As to quaternary structure, part of the 50S ribosomal subunit. Forms a cluster with proteins L14 and L19.

In terms of biological role, one of the primary rRNA binding proteins, it binds directly near the 3'-end of the 23S rRNA, where it nucleates assembly of the 50S subunit. The chain is Large ribosomal subunit protein uL3 from Mesomycoplasma hyopneumoniae (strain 232) (Mycoplasma hyopneumoniae).